We begin with the raw amino-acid sequence, 157 residues long: 6,7-dimethyl-8-ribityllumazine synthase (157 aa).

Residues F30, 64 to 66 (ALE), and 88 to 90 (CII) each bind 5-amino-6-(D-ribitylamino)uracil. 93-94 (ET) contacts (2S)-2-hydroxy-3-oxobutyl phosphate. H96 acts as the Proton donor in catalysis. Position 121 (N121) interacts with 5-amino-6-(D-ribitylamino)uracil. R135 lines the (2S)-2-hydroxy-3-oxobutyl phosphate pocket.

It belongs to the DMRL synthase family.

It catalyses the reaction (2S)-2-hydroxy-3-oxobutyl phosphate + 5-amino-6-(D-ribitylamino)uracil = 6,7-dimethyl-8-(1-D-ribityl)lumazine + phosphate + 2 H2O + H(+). The protein operates within cofactor biosynthesis; riboflavin biosynthesis; riboflavin from 2-hydroxy-3-oxobutyl phosphate and 5-amino-6-(D-ribitylamino)uracil: step 1/2. Catalyzes the formation of 6,7-dimethyl-8-ribityllumazine by condensation of 5-amino-6-(D-ribitylamino)uracil with 3,4-dihydroxy-2-butanone 4-phosphate. This is the penultimate step in the biosynthesis of riboflavin. The chain is 6,7-dimethyl-8-ribityllumazine synthase from Albidiferax ferrireducens (strain ATCC BAA-621 / DSM 15236 / T118) (Rhodoferax ferrireducens).